Consider the following 474-residue polypeptide: Glutamate--tRNA ligase (474 aa).

Residues 9–19 (PSPTGFLHVGG) carry the 'HIGH' region motif. The short motif at 240–244 (KLSKR) is the 'KMSKS' region element. K243 contributes to the ATP binding site.

This sequence belongs to the class-I aminoacyl-tRNA synthetase family. Glutamate--tRNA ligase type 1 subfamily. As to quaternary structure, monomer.

Its subcellular location is the cytoplasm. It carries out the reaction tRNA(Glu) + L-glutamate + ATP = L-glutamyl-tRNA(Glu) + AMP + diphosphate. Its function is as follows. Catalyzes the attachment of glutamate to tRNA(Glu) in a two-step reaction: glutamate is first activated by ATP to form Glu-AMP and then transferred to the acceptor end of tRNA(Glu). The polypeptide is Glutamate--tRNA ligase (Photobacterium profundum (strain SS9)).